Reading from the N-terminus, the 501-residue chain is MDHFKQLEVWFVIGSQHLYGPETLRQVKENAEKVVTGLNQQANLPVKLVLKPLVKTPDEILALCRDANYQDNCIGLLTWLHTFSPAKMWIGGLSILSKPLLQFHTQFNAEVPWDTMDMDFMNLNQTAHGGREFGFIGARMRQAHQVVVGHWQDKNAHARIGKWMRVAAAIQESKQLKVARFGDNMREVAVTEGDKVGAQIQFGYSVSAWGLGDLTAVVDAVSKGDINALVDEYEASYQLTDAVKLNGANRQNLLDAAQIELGMKRFLEQGGYHAFTTDFENLYGLKQLPGLAVQRLMQQGYGFGGEGDWKTAALLRIMKVMASGLSGGTSFMEDYTYNFQNGNDLVVGSHMLEVCPTIAKEQKPILDAQYLGIGGKADPARLIFSTPAGPSLNASVIDMGDRFRMLVNLVDTIEQPHPLPKLPVARAIWKAQPSLDVAAEAWILAGGAHHTVFSQALDLEHMRLYAEMQNIELLVIDNETRLHEFKDALRWNEVYYKLCSR.

Positions 306, 333, 350, and 450 each coordinate Mn(2+).

It belongs to the arabinose isomerase family. Homohexamer. It depends on Mn(2+) as a cofactor.

It carries out the reaction beta-L-arabinopyranose = L-ribulose. The protein operates within carbohydrate degradation; L-arabinose degradation via L-ribulose; D-xylulose 5-phosphate from L-arabinose (bacterial route): step 1/3. In terms of biological role, catalyzes the conversion of L-arabinose to L-ribulose. The protein is L-arabinose isomerase of Pectobacterium carotovorum subsp. carotovorum (strain PC1).